We begin with the raw amino-acid sequence, 170 residues long: Ecotin (170 aa).

Residues 1 to 21 (MNKASVVFSGLLMAVSASAIA) form the signal peptide. Residues C78 and C115 are joined by a disulfide bond.

Belongs to the protease inhibitor I11 (ecotin) family. As to quaternary structure, homodimer.

It is found in the periplasm. General inhibitor of pancreatic serine proteases: inhibits chymotrypsin, trypsin, elastases, factor X, kallikrein as well as a variety of other proteases. The protein is Ecotin of Serratia proteamaculans (strain 568).